Reading from the N-terminus, the 349-residue chain is Magnesium-protoporphyrin IX monomethyl ester [oxidative] cyclase (349 aa).

Residues 1 to 10 (MTATTATAPA) show a composition bias toward low complexity. Positions 1-23 (MTATTATAPAMRGGGRNELPPHL) are disordered.

Belongs to the AcsF family. Fe cation is required as a cofactor.

The enzyme catalyses Mg-protoporphyrin IX 13-monomethyl ester + 3 NADPH + 3 O2 + 2 H(+) = 3,8-divinyl protochlorophyllide a + 3 NADP(+) + 5 H2O. It participates in porphyrin-containing compound metabolism; chlorophyll biosynthesis (light-independent). In terms of biological role, catalyzes the formation of the isocyclic ring in chlorophyll biosynthesis. Mediates the cyclase reaction, which results in the formation of divinylprotochlorophyllide (Pchlide) characteristic of all chlorophylls from magnesium-protoporphyrin IX 13-monomethyl ester (MgPMME). The polypeptide is Magnesium-protoporphyrin IX monomethyl ester [oxidative] cyclase (Prochlorococcus marinus (strain MIT 9303)).